The primary structure comprises 285 residues: uncharacterized protein (285 aa).

The disordered stretch occupies residues 1–25 (MANQKKKTLPPQHQNQQPGFEYLMD). An NADP(+)-binding site is contributed by 45–69 (IITGGDSGIGRAVSVLFAKEGANVV). Residue Ser-177 coordinates substrate. The active-site Proton acceptor is Tyr-190.

This sequence belongs to the short-chain dehydrogenases/reductases (SDR) family.

This is an uncharacterized protein from Bacillus subtilis (strain 168).